The sequence spans 427 residues: Enolase (427 aa).

Q162 provides a ligand contact to (2R)-2-phosphoglycerate. E204 acts as the Proton donor in catalysis. Residues D241, E284, and D311 each contribute to the Mg(2+) site. (2R)-2-phosphoglycerate-binding residues include K336, R365, S366, and K387. K336 functions as the Proton acceptor in the catalytic mechanism.

This sequence belongs to the enolase family. Requires Mg(2+) as cofactor.

It localises to the cytoplasm. The protein localises to the secreted. The protein resides in the cell surface. The enzyme catalyses (2R)-2-phosphoglycerate = phosphoenolpyruvate + H2O. It participates in carbohydrate degradation; glycolysis; pyruvate from D-glyceraldehyde 3-phosphate: step 4/5. Functionally, catalyzes the reversible conversion of 2-phosphoglycerate (2-PG) into phosphoenolpyruvate (PEP). It is essential for the degradation of carbohydrates via glycolysis. The protein is Enolase of Corynebacterium kroppenstedtii (strain DSM 44385 / JCM 11950 / CIP 105744 / CCUG 35717).